The chain runs to 415 residues: Pectin acetylesterase 12 (415 aa).

An N-terminal signal peptide occupies residues 1 to 20 (MVKLLLVGFVVAGIILGTQA). Asn-27 carries N-linked (GlcNAc...) asparagine glycosylation. Residues Ser-197, Asp-293, and His-360 each act as charge relay system in the active site.

This sequence belongs to the pectinacetylesterase family.

It is found in the secreted. The protein resides in the cell wall. In terms of biological role, hydrolyzes acetyl esters in homogalacturonan regions of pectin. In type I primary cell wall, galacturonic acid residues of pectin can be acetylated at the O-2 and O-3 positions. Decreasing the degree of acetylation of pectin gels in vitro alters their physical properties. This is Pectin acetylesterase 12 from Arabidopsis thaliana (Mouse-ear cress).